A 134-amino-acid polypeptide reads, in one-letter code: Probable glycine cleavage system H protein (134 aa).

Positions 29–110 (TVLVGISDYA…PYENWIAKLK (82 aa)) constitute a Lipoyl-binding domain. An N6-lipoyllysine modification is found at Lys-70.

The protein belongs to the GcvH family. In terms of assembly, the glycine cleavage system is composed of four proteins: P, T, L and H. The cofactor is (R)-lipoate.

The glycine cleavage system catalyzes the degradation of glycine. The H protein shuttles the methylamine group of glycine from the P protein to the T protein. The polypeptide is Probable glycine cleavage system H protein (Thermococcus kodakarensis (strain ATCC BAA-918 / JCM 12380 / KOD1) (Pyrococcus kodakaraensis (strain KOD1))).